A 58-amino-acid chain; its full sequence is Keratin-associated protein 19-6 (58 aa).

It belongs to the KRTAP type 19 family. As to quaternary structure, interacts with hair keratins.

In the hair cortex, hair keratin intermediate filaments are embedded in an interfilamentous matrix, consisting of hair keratin-associated proteins (KRTAP), which are essential for the formation of a rigid and resistant hair shaft through their extensive disulfide bond cross-linking with abundant cysteine residues of hair keratins. The matrix proteins include the high-sulfur and high-glycine-tyrosine keratins. This is Keratin-associated protein 19-6 (KRTAP19-6) from Homo sapiens (Human).